Here is a 219-residue protein sequence, read N- to C-terminus: MVDLKTKAFDFSQNFTISLDGPAASGKGTIGLILAKKFSLKYFQSSIVYRQLAFDCINQKIDVTDIDAVIALSKELNLDNNFDLENEDIGNIASQIAVISEVRNNLNKYLINLVKTTLRIIMEGRDIGTVIAPDADLKVFITANPQIRAERRYKQLQAKGKTCILDEILRQIILRDKRDKERKAAPLLPASDALIIDTSELSAIEVVEEITNYIKNKLT.

An ATP-binding site is contributed by 21–29 (GPAASGKGT).

This sequence belongs to the cytidylate kinase family. Type 1 subfamily.

The protein localises to the cytoplasm. It carries out the reaction CMP + ATP = CDP + ADP. It catalyses the reaction dCMP + ATP = dCDP + ADP. The protein is Cytidylate kinase of Rickettsia felis (strain ATCC VR-1525 / URRWXCal2) (Rickettsia azadi).